A 301-amino-acid chain; its full sequence is Probable aspartoacylase (301 aa).

Zn(2+) is bound by residues His-13 and Glu-16. Residues Arg-54 and 61-62 each bind substrate; that span reads NR. His-105 provides a ligand contact to Zn(2+). Residues Glu-163 and Tyr-273 each contribute to the substrate site.

Belongs to the AspA/AstE family. Aspartoacylase subfamily. The cofactor is Zn(2+).

The enzyme catalyses an N-acyl-L-aspartate + H2O = a carboxylate + L-aspartate. This Prochlorococcus marinus (strain AS9601) protein is Probable aspartoacylase.